The primary structure comprises 241 residues: DNA repair protein RecO (241 aa).

Belongs to the RecO family.

Involved in DNA repair and RecF pathway recombination. This chain is DNA repair protein RecO, found in Ruegeria sp. (strain TM1040) (Silicibacter sp.).